Here is a 212-residue protein sequence, read N- to C-terminus: Protein GrpE (212 aa).

The interval 1 to 68 (MAETSNNKTS…ELESAKKEIE (68 aa)) is disordered. Residues 9–30 (TSEEAKANEKKSQSETLEESKL) show a composition bias toward basic and acidic residues. The span at 40 to 60 (ETTQTESMETAETETSLQTEL) shows a compositional bias: low complexity.

Belongs to the GrpE family. In terms of assembly, homodimer.

It is found in the cytoplasm. Functionally, participates actively in the response to hyperosmotic and heat shock by preventing the aggregation of stress-denatured proteins, in association with DnaK and GrpE. It is the nucleotide exchange factor for DnaK and may function as a thermosensor. Unfolded proteins bind initially to DnaJ; upon interaction with the DnaJ-bound protein, DnaK hydrolyzes its bound ATP, resulting in the formation of a stable complex. GrpE releases ADP from DnaK; ATP binding to DnaK triggers the release of the substrate protein, thus completing the reaction cycle. Several rounds of ATP-dependent interactions between DnaJ, DnaK and GrpE are required for fully efficient folding. This chain is Protein GrpE, found in Leptospira interrogans serogroup Icterohaemorrhagiae serovar copenhageni (strain Fiocruz L1-130).